Here is a 475-residue protein sequence, read N- to C-terminus: Protein FIZZY-RELATED 1 (475 aa).

A disordered region spans residues 1 to 27; sequence MEEDESTTPKKKSDSQLNLPPSMNRPT. Positions 15–27 are enriched in polar residues; the sequence is SQLNLPPSMNRPT. WD repeat units follow at residues 166-203, 207-246, 249-289, 290-329, 332-374, 376-417, and 420-459; these read QDDFYLNLVDWSAQNVLAVGLGNCVYLWNACSSKVTKL, GVDETVCSVGWALRGTHLAIGTSSGTVQIWDVLRCKNIRT, GHRL…SKLK, GHKSEICGLKWSSDNRELASGGNDNKLFVWNQHSTQPVLR, EHAA…HLNC, DTNS…KLAT, and GHSYRVLYLAVSPDGQTIVTGAGDETLRFWNVFPSPKSQS.

The protein belongs to the WD repeat CDC20/Fizzy family. Associates with the APC/C complex. Interacts with CDC20-1, CDC20-2, CYCA1-1, CYCA1-2, CYCA3-4, CYCB1-1 and CYCB1-2. Binds to GIG1. Expressed in the root tip, predominantly in the root cap, quiescent center cells, surrounding stem cells and columella.

The protein resides in the nucleus. The protein operates within protein modification; protein ubiquitination. In terms of biological role, activator protein that regulates the ubiquitin ligase activity and substrate specificity of the anaphase promoting complex/cyclosome (APC/C). Required for meristem organization and maintenance of quiescent center identity and stem cells. The protein is Protein FIZZY-RELATED 1 (FZR1) of Arabidopsis thaliana (Mouse-ear cress).